The primary structure comprises 99 residues: DNA-directed RNA polymerase subunit omega (99 aa).

Belongs to the RNA polymerase subunit omega family. As to quaternary structure, the RNAP catalytic core consists of 2 alpha, 1 beta, 1 beta' and 1 omega subunit. When a sigma factor is associated with the core the holoenzyme is formed, which can initiate transcription.

The catalysed reaction is RNA(n) + a ribonucleoside 5'-triphosphate = RNA(n+1) + diphosphate. Promotes RNA polymerase assembly. Latches the N- and C-terminal regions of the beta' subunit thereby facilitating its interaction with the beta and alpha subunits. This chain is DNA-directed RNA polymerase subunit omega, found in Thermus thermophilus (strain ATCC BAA-163 / DSM 7039 / HB27).